The primary structure comprises 150 residues: Anthrone oxygenase gedH (150 aa).

4 helical membrane passes run Met-1–Leu-21, Gly-41–Ala-61, Pro-73–Ser-93, and Leu-128–Gly-148.

The protein belongs to the anthrone oxygenase family.

It is found in the membrane. It carries out the reaction emodin anthrone + O2 = emodin + H2O + H(+). Its pathway is secondary metabolite biosynthesis. In terms of biological role, anthrone oxygenase; part of the gene cluster that mediates the biosynthesis of geodin, an intermediate in the biosynthesis of other natural products. The pathway begins with the synthesis of atrochrysone thioester by the polyketide synthase (PKS) gedC. The atrochrysone carboxyl ACP thioesterase gedB then breaks the thioester bond and releases the atrochrysone carboxylic acid from gedC. The atrochrysone carboxylic acid is then converted to atrochrysone which is further transformed into emodin anthrone. The next step is performed by the emodin anthrone oxygenase gedH that catalyzes the oxidation of emodinanthrone to emodin. Emodin O-methyltransferase encoded probably by gedA then catalyzes methylation of the 8-hydroxy group of emodin to form questin. Ring cleavage of questin by questin oxidase gedK leads to desmethylsulochrin via several intermediates including questin epoxide. Another methylation step probably catalyzed by methyltransferase gedG leads to the formation of sulochrin which is further converted to dihydrogeodin by the sulochrin halogenase gedL. Finally, the dihydrogeodin oxidase gedJ catalyzes the stereospecific phenol oxidative coupling reaction converting dihydrogeodin to geodin. This is Anthrone oxygenase gedH from Aspergillus terreus (strain NIH 2624 / FGSC A1156).